We begin with the raw amino-acid sequence, 1076 residues long: Ribosome quality control complex subunit NEMF (1076 aa).

Thr7 carries the phosphothreonine modification. Residues 296 to 359 (VDEFYSKIEG…LIEMNLQIVD (64 aa)) are a coiled coil. Ser417 bears the Phosphoserine mark. The interval 420 to 453 (EDDDVDGDVNVEKNETEPPKGKKKKQKNKQLQKP) is disordered. Positions 429 to 439 (NVEKNETEPPK) are enriched in basic and acidic residues. Residues 440-449 (GKKKKQKNKQ) show a composition bias toward basic residues. A coiled-coil region spans residues 483–514 (AAKKTQKTVEAAEKAFKSAEKKTKQTLKEVQT). 2 stretches are compositionally biased toward acidic residues: residues 691 to 710 (ISEEMEQLDGGDTSSDEDKE) and 742 to 754 (LIQEESSEDEGEY). Disordered regions lie at residues 691-715 (ISEEMEQLDGGDTSSDEDKEEHETP) and 742-972 (LIQE…DLDQ). Residues Ser747, Ser748, and Ser763 each carry the phosphoserine modification. A compositionally biased stretch (basic and acidic residues) spans 755-768 (EEVRKDQDSVGEMK). A compositionally biased stretch (polar residues) spans 777-795 (YPDTTIDLSHLQPQRSIQK). Ser831 is subject to Phosphoserine. Residues 839 to 854 (LEGKDKEKESTVHIET) show a composition bias toward basic and acidic residues. Residues 869–894 (KRGQKSKMKKMKEKYKDQDEEDRELI) are a coiled coil. Residues 870–881 (RGQKSKMKKMKE) show a composition bias toward basic residues. Residues 937–965 (DNIKKETPFLEVITHELQDFAVDDPHDDK) are compositionally biased toward basic and acidic residues.

It belongs to the NEMF family. As to quaternary structure, component of the ribosome quality control complex (RQC), composed of the E3 ubiquitin ligase LTN1, TCF25 and NEMF associated with the 60S ribosomal subunit. The complex probably also contains VCP/p97 and its ubiquitin-binding cofactors. Interacts (via its N-terminus) with XPO1. Expressed in brain, heart, liver, lung, spleen, and skeletal muscle. Also expressed at lower levels in stomach and testis.

The protein localises to the cytoplasm. Its subcellular location is the cytosol. It is found in the nucleus. In terms of biological role, key component of the ribosome quality control complex (RQC), a ribosome-associated complex that mediates the extraction of incompletely synthesized nascent chains from stalled ribosomes as well as their ubiquitin-mediated proteasomal degradation. Thereby, frees 60S subunit ribosomes from the stalled translation complex and prevents the accumulation of nascent polypeptide chains that are potentially toxic for the cell. Within the RQC complex, NEMF specifically binds stalled 60S ribosomal subunits by recognizing an exposed, nascent chain-conjugated tRNA moiety and promotes the recruitment of LTN1 to stalled 60S subunits. Following binding to stalled 60S ribosomal subunits, NEMF mediates CAT tailing by recruiting alanine-charged tRNA to the A-site and directing the elongation of stalled nascent chains independently of mRNA or 40S subunits, leading to non-templated C-terminal alanine extensions (CAT tails). Mainly recruits alanine-charged tRNAs, but can also other amino acid-charged tRNAs. CAT tailing is required to promote ubiquitination of stalled nascent chains by different E3 ubiquitin-protein ligases. In the canonical RQC pathway (RQC-L), CAT tailing facilitates LTN1-dependent ubiquitination by exposing lysine residues that would otherwise remain buried in the ribosomal exit tunnel. In the alternative RQC pathway (RQC-C) CAT tailing creates an C-degron mainly composed of alanine that is recognized by the CRL2(KLHDC10) and RCHY1/PIRH2 E3 ligases, leading to ubiquitination and degradation of stalled nascent chains. NEMF may also indirectly play a role in nuclear export. This chain is Ribosome quality control complex subunit NEMF, found in Homo sapiens (Human).